Here is a 137-residue protein sequence, read N- to C-terminus: Small ribosomal subunit protein uS9 (137 aa).

Residues Leu105–Ala117 show a composition bias toward basic and acidic residues. Residues Leu105 to Arg137 form a disordered region. Over residues Lys118–Arg137 the composition is skewed to basic residues.

Belongs to the universal ribosomal protein uS9 family.

This is Small ribosomal subunit protein uS9 from Cyanothece sp. (strain PCC 7425 / ATCC 29141).